The chain runs to 135 residues: Putative pre-16S rRNA nuclease (135 aa).

This sequence belongs to the YqgF nuclease family.

It localises to the cytoplasm. Could be a nuclease involved in processing of the 5'-end of pre-16S rRNA. In Maridesulfovibrio salexigens (strain ATCC 14822 / DSM 2638 / NCIMB 8403 / VKM B-1763) (Desulfovibrio salexigens), this protein is Putative pre-16S rRNA nuclease.